The following is a 374-amino-acid chain: Phosphoserine aminotransferase (374 aa).

L-glutamate is bound at residue Arg46. Residues 80-81 (AT), Phe104, Thr150, Asp174, and Gln197 each bind pyridoxal 5'-phosphate. At Lys198 the chain carries N6-(pyridoxal phosphate)lysine. 249-250 (NT) provides a ligand contact to pyridoxal 5'-phosphate.

Belongs to the class-V pyridoxal-phosphate-dependent aminotransferase family. SerC subfamily. Homodimer. Requires pyridoxal 5'-phosphate as cofactor.

It localises to the cytoplasm. It carries out the reaction O-phospho-L-serine + 2-oxoglutarate = 3-phosphooxypyruvate + L-glutamate. The enzyme catalyses 4-(phosphooxy)-L-threonine + 2-oxoglutarate = (R)-3-hydroxy-2-oxo-4-phosphooxybutanoate + L-glutamate. It participates in amino-acid biosynthesis; L-serine biosynthesis; L-serine from 3-phospho-D-glycerate: step 2/3. The protein operates within cofactor biosynthesis; pyridoxine 5'-phosphate biosynthesis; pyridoxine 5'-phosphate from D-erythrose 4-phosphate: step 3/5. In terms of biological role, catalyzes the reversible conversion of 3-phosphohydroxypyruvate to phosphoserine and of 3-hydroxy-2-oxo-4-phosphonooxybutanoate to phosphohydroxythreonine. The sequence is that of Phosphoserine aminotransferase from Nocardioides sp. (strain ATCC BAA-499 / JS614).